The primary structure comprises 120 residues: MYKNIKKFKLESFIAQEIGNLIVSGGIKDPRIHSFLTVVKVEFSKDLINAKVFMGSIKEGASLDNAVKALNNAKGFIQSQIIKRIKVRSTPKLLFVKDDSLSKSFYVNKLIEGLNTTREN.

This sequence belongs to the RbfA family. As to quaternary structure, monomer. Binds 30S ribosomal subunits, but not 50S ribosomal subunits or 70S ribosomes.

The protein resides in the cytoplasm. Its function is as follows. One of several proteins that assist in the late maturation steps of the functional core of the 30S ribosomal subunit. Associates with free 30S ribosomal subunits (but not with 30S subunits that are part of 70S ribosomes or polysomes). Required for efficient processing of 16S rRNA. May interact with the 5'-terminal helix region of 16S rRNA. In Borreliella burgdorferi (strain ATCC 35210 / DSM 4680 / CIP 102532 / B31) (Borrelia burgdorferi), this protein is Ribosome-binding factor A.